The sequence spans 370 residues: Arginine kinase (370 aa).

The 84-residue stretch at 6 to 89 folds into the Phosphagen kinase N-terminal domain; it reads QKKYPAKDDF…FDPVIEEYHN (84 aa). The Phosphagen kinase C-terminal domain maps to 115-358; the sequence is YVISSRVRTG…KVLIEMEKKL (244 aa). ATP-binding positions include 118–122 and His-181; that span reads SSRVR. A substrate-binding site is contributed by Glu-222. Arg-226 lines the ATP pocket. Cys-274 is a binding site for substrate. ATP is bound by residues 283–287 and 311–316; these read RCSVH and RGTSGE. Residue Glu-316 coordinates substrate.

Belongs to the ATP:guanido phosphotransferase family. Homodimer. Post-translationally, the N-terminus is blocked.

It catalyses the reaction L-arginine + ATP = N(omega)-phospho-L-arginine + ADP + H(+). The sequence is that of Arginine kinase (AK) from Stichopus japonicus (Sea cucumber).